An 854-amino-acid polypeptide reads, in one-letter code: Alkaline phosphatase-like protein PglZ (854 aa).

Belongs to the alkaline phosphatase superfamily.

Functionally, BREX systems (bacteriophage exclusion) provide immunity against bacteriophage. A core protein of a type 1 BREX system. This system allows phage adsorption but prevents phage DNA replication, without degradation of the phage DNA. Methylation of bacterial DNA by PglX probably guides self/non-self discrimination. When the brxA-brxB-brxC-pglX and pglZ-brxL operons are transformed into a susceptible B.subtilis strain (BEST7003) they confer resistance to bacteriophages SPbeta, SP16, Zeta, phi3T and SP02 and partial protection to phages SP01 and SP82G (these include lytic and temperate phage). They do not protect against phages phi105, rho10 or rho14. Additionally confers a very slight reduction in efficiency of plasmid transformation. In Bacillus cereus (strain H3081.97), this protein is Alkaline phosphatase-like protein PglZ.